Consider the following 378-residue polypeptide: C-C chemokine receptor type 7 (378 aa).

A signal peptide spans 1–24; sequence MDPGKPRKNVLVVALLVIFQVCFC. Residues 25–59 lie on the Extracellular side of the membrane; that stretch reads QDEVTDDYIGENTTVDYTLYESVCFKKDVRNFKAW. An N-linked (GlcNAc...) asparagine glycan is attached at Asn36. Residues 60–86 traverse the membrane as a helical segment; the sequence is FLPLMYSVICFVGLLGNGLVILTYIYF. Topologically, residues 87-95 are cytoplasmic; it reads KRLKTMTDT. Residues 96–116 traverse the membrane as a helical segment; it reads YLLNLAVADILFLLILPFWAY. Topologically, residues 117–130 are extracellular; the sequence is SEAKSWIFGVYLCK. A disulfide bond links Cys129 and Cys210. The helical transmembrane segment at 131–152 threads the bilayer; it reads GIFGIYKLSFFSGMLLLLCISI. The Cytoplasmic portion of the chain corresponds to 153 to 170; the sequence is DRYVAIVQAVSAHRHRAR. The chain crosses the membrane as a helical span at residues 171 to 191; sequence VLLISKLSCVGIWMLALFLSI. Topologically, residues 192–219 are extracellular; the sequence is PELLYSGLQKNSGEDTLRCSLVSAQVEA. The helical transmembrane segment at 220 to 247 threads the bilayer; the sequence is LITIQVAQMVFGFLVPMLAMSFCYLIII. Residues 248 to 263 lie on the Cytoplasmic side of the membrane; sequence RTLLQARNFERNKAIK. Residues 264–289 form a helical membrane-spanning segment; it reads VIIAVVVVFIVFQLPYNGVVLAQTVA. At 290–313 the chain is on the extracellular side; the sequence is NFNITNSSCETSKQLNIAYDVTYS. The chain crosses the membrane as a helical span at residues 314–331; it reads LASVRCCVNPFLYAFIGV. Topologically, residues 332–378 are cytoplasmic; that stretch reads KFRSDLFKLFKDLGCLSQERLRHWSSCRHVRNASVSMEAETTTTFSP.

It belongs to the G-protein coupled receptor 1 family.

It localises to the cell membrane. Functionally, receptor for the MIP-3-beta chemokine. This Mus musculus (Mouse) protein is C-C chemokine receptor type 7 (Ccr7).